Reading from the N-terminus, the 375-residue chain is Chaperone protein DnaJ 1 (375 aa).

A J domain is found at 4 to 68 (DYYAILGVER…EKRRIVDMGG (65 aa)). The segment at 127 to 209 (GTKKPITIDT…CGGDGRVRTQ (83 aa)) adopts a CR-type zinc-finger fold. Residues Cys140, Cys143, Cys157, Cys160, Cys183, Cys186, Cys197, and Cys200 each coordinate Zn(2+). 4 CXXCXGXG motif repeats span residues 140–147 (CDRCEGTG), 157–164 (CSTCNGSG), 183–190 (CPTCRGTG), and 197–204 (CDKCGGDG).

This sequence belongs to the DnaJ family. Homodimer. It depends on Zn(2+) as a cofactor.

The protein resides in the cytoplasm. Its function is as follows. Participates actively in the response to hyperosmotic and heat shock by preventing the aggregation of stress-denatured proteins and by disaggregating proteins, also in an autonomous, DnaK-independent fashion. Unfolded proteins bind initially to DnaJ; upon interaction with the DnaJ-bound protein, DnaK hydrolyzes its bound ATP, resulting in the formation of a stable complex. GrpE releases ADP from DnaK; ATP binding to DnaK triggers the release of the substrate protein, thus completing the reaction cycle. Several rounds of ATP-dependent interactions between DnaJ, DnaK and GrpE are required for fully efficient folding. Also involved, together with DnaK and GrpE, in the DNA replication of plasmids through activation of initiation proteins. The polypeptide is Chaperone protein DnaJ 1 (Corynebacterium diphtheriae (strain ATCC 700971 / NCTC 13129 / Biotype gravis)).